The chain runs to 430 residues: Enolase (430 aa).

Q163 contacts (2R)-2-phosphoglycerate. E205 (proton donor) is an active-site residue. Residues D242, E287, and D314 each coordinate Mg(2+). Residues K339, R368, S369, and K390 each contribute to the (2R)-2-phosphoglycerate site. K339 acts as the Proton acceptor in catalysis.

The protein belongs to the enolase family. It depends on Mg(2+) as a cofactor.

The protein resides in the cytoplasm. The protein localises to the secreted. Its subcellular location is the cell surface. It catalyses the reaction (2R)-2-phosphoglycerate = phosphoenolpyruvate + H2O. The protein operates within carbohydrate degradation; glycolysis; pyruvate from D-glyceraldehyde 3-phosphate: step 4/5. Functionally, catalyzes the reversible conversion of 2-phosphoglycerate (2-PG) into phosphoenolpyruvate (PEP). It is essential for the degradation of carbohydrates via glycolysis. This chain is Enolase, found in Bacillus licheniformis (strain ATCC 14580 / DSM 13 / JCM 2505 / CCUG 7422 / NBRC 12200 / NCIMB 9375 / NCTC 10341 / NRRL NRS-1264 / Gibson 46).